A 43-amino-acid chain; its full sequence is Mu-conotoxin-like CalTx 12.2.1E (43 aa).

Arg1 is a propeptide. Disulfide bonds link Cys4–Cys16, Cys11–Cys24, Cys18–Cys29, and Cys23–Cys35. A 6'-bromotryptophan modification is found at Trp31. Pro36 carries the post-translational modification 4-hydroxyproline. Residue Trp40 is modified to 6'-bromotryptophan.

As to expression, expressed by the venom duct.

It is found in the secreted. Functionally, mu-conotoxins block voltage-gated sodium channels. This toxin reversibly blocks voltage-gated sodium channel in cephalopods, with no alteration in the voltage dependence of sodium conductance or on the kinetics of inactivation. The protein is Mu-conotoxin-like CalTx 12.2.1E of Californiconus californicus (California cone).